Reading from the N-terminus, the 223-residue chain is Cytidylate kinase (223 aa).

An ATP-binding site is contributed by 10–18; it reads GPASSGKST.

The protein belongs to the cytidylate kinase family. Type 1 subfamily.

It is found in the cytoplasm. The catalysed reaction is CMP + ATP = CDP + ADP. It carries out the reaction dCMP + ATP = dCDP + ADP. This Streptococcus pneumoniae serotype 4 (strain ATCC BAA-334 / TIGR4) protein is Cytidylate kinase.